The following is a 336-amino-acid chain: WAT1-related protein At2g37450 (336 aa).

9 helical membrane passes run 7–27, 45–65, 79–99, 115–135, 160–180, 189–209, 227–247, 255–275, and 279–299; these read ALPF…DILT, HGVA…PVIA, TFAI…ALIF, VVGT…KGPA, GAVL…LQAI, LSLA…VALV, LTIT…GGVV, FVTA…SIIF, and MYLG…LVIW. 2 consecutive EamA domains span residues 63-126 and 169-298; these read VIAQ…GGIM and FSYA…YLVI.

It belongs to the drug/metabolite transporter (DMT) superfamily. Plant drug/metabolite exporter (P-DME) (TC 2.A.7.4) family.

It is found in the membrane. The polypeptide is WAT1-related protein At2g37450 (Arabidopsis thaliana (Mouse-ear cress)).